Here is a 166-residue protein sequence, read N- to C-terminus: Protein TIFY 11e (166 aa).

The Tify domain occupies 65–100 (ASSAAAQMTIFYGGRVLVLDECPADRAAALLRLAAS). Residues 123–148 (PVARKASLQRFMEKRKGRLAARGQPY) carry the Jas motif. A Nuclear localization signal motif is present at residues 125–132 (ARKASLQR).

Belongs to the TIFY/JAZ family. In terms of processing, ubiquitinated. Targeted for degradation by the SCF(COI1) E3 ubiquitin ligase-proteasome pathway during jasmonate signaling.

It is found in the nucleus. In terms of biological role, repressor of jasmonate responses. The sequence is that of Protein TIFY 11e from Oryza sativa subsp. japonica (Rice).